The chain runs to 148 residues: Cytochrome c oxidase subunit 4, mitochondrial (148 aa).

The N-terminal 24 residues, 1 to 24 (MFALRSIRSATKAFQTTSIVSQRG), are a transit peptide targeting the mitochondrion.

Slime mold cytochrome c oxidase consists of at least seven different polypeptides species, subunits I, II, III, IV, V, VI, and VIIe/s in order of MW.

It is found in the mitochondrion inner membrane. The enzyme catalyses 4 Fe(II)-[cytochrome c] + O2 + 8 H(+)(in) = 4 Fe(III)-[cytochrome c] + 2 H2O + 4 H(+)(out). In terms of biological role, this protein is one of the nuclear-coded polypeptide chains of cytochrome c oxidase, the terminal oxidase in mitochondrial electron transport. This Dictyostelium discoideum (Social amoeba) protein is Cytochrome c oxidase subunit 4, mitochondrial (cxdA).